The primary structure comprises 418 residues: Gamma-glutamyl phosphate reductase (418 aa).

Belongs to the gamma-glutamyl phosphate reductase family.

The protein localises to the cytoplasm. It carries out the reaction L-glutamate 5-semialdehyde + phosphate + NADP(+) = L-glutamyl 5-phosphate + NADPH + H(+). It functions in the pathway amino-acid biosynthesis; L-proline biosynthesis; L-glutamate 5-semialdehyde from L-glutamate: step 2/2. Catalyzes the NADPH-dependent reduction of L-glutamate 5-phosphate into L-glutamate 5-semialdehyde and phosphate. The product spontaneously undergoes cyclization to form 1-pyrroline-5-carboxylate. The chain is Gamma-glutamyl phosphate reductase from Thermobifida fusca (strain YX).